The sequence spans 409 residues: Dihydrolipoyllysine-residue succinyltransferase component of 2-oxoglutarate dehydrogenase complex (409 aa).

Residues 2-77 (AIEILVPDLP…VSKQLLGKIS (76 aa)) enclose the Lipoyl-binding domain. Residue K43 is modified to N6-lipoyllysine. The segment covering 83–107 (DVSSATLKATNEPTPSDRQNAAIEN) has biased composition (polar residues). The interval 83 to 114 (DVSSATLKATNEPTPSDRQNAAIENSHNHNAD) is disordered. The region spanning 114–151 (DQSPVIRRLLAEHDLQADQIQGSGVGGRLTREDIEREI) is the Peripheral subunit-binding (PSBD) domain. Catalysis depends on residues H380 and D384.

The protein belongs to the 2-oxoacid dehydrogenase family. In terms of assembly, forms a 24-polypeptide structural core with octahedral symmetry. Part of the 2-oxoglutarate dehydrogenase (OGDH) complex composed of E1 (2-oxoglutarate dehydrogenase), E2 (dihydrolipoamide succinyltransferase) and E3 (dihydrolipoamide dehydrogenase); the complex contains multiple copies of the three enzymatic components (E1, E2 and E3). Requires (R)-lipoate as cofactor.

It catalyses the reaction N(6)-[(R)-dihydrolipoyl]-L-lysyl-[protein] + succinyl-CoA = N(6)-[(R)-S(8)-succinyldihydrolipoyl]-L-lysyl-[protein] + CoA. Its pathway is amino-acid degradation; L-lysine degradation via saccharopine pathway; glutaryl-CoA from L-lysine: step 6/6. E2 component of the 2-oxoglutarate dehydrogenase (OGDH) complex which catalyzes the second step in the conversion of 2-oxoglutarate to succinyl-CoA and CO(2). This chain is Dihydrolipoyllysine-residue succinyltransferase component of 2-oxoglutarate dehydrogenase complex (sucB), found in Haemophilus influenzae (strain ATCC 51907 / DSM 11121 / KW20 / Rd).